The sequence spans 87 residues: Small ribosomal subunit protein bS20 (87 aa).

Positions 1-25 (MANIKSAKKRAVQSEKHRLHNASRR) are disordered.

It belongs to the bacterial ribosomal protein bS20 family.

Functionally, binds directly to 16S ribosomal RNA. This chain is Small ribosomal subunit protein bS20, found in Baumannia cicadellinicola subsp. Homalodisca coagulata.